We begin with the raw amino-acid sequence, 208 residues long: CASP-like protein 2U9 (208 aa).

Residues 1 to 27 (MGVADAPSPGNVPVLGDMKNRSAAEMK) are Cytoplasmic-facing. Residues 28–48 (ISVLALRALTLVLLVIALALM) traverse the membrane as a helical segment. The Extracellular segment spans residues 49–87 (VSNKQTQSIPIKLPGMASTIFLKKTATFSQITGVQYYVG). A helical transmembrane segment spans residues 88 to 108 (ALSVAVAYMFFQMLAGLFTIL). Residues 109-120 (TTGSIVGSKSRA) are Cytoplasmic-facing. A helical membrane pass occupies residues 121–141 (WVTFILDQLIAYLMVSAATVV). Topologically, residues 142–168 (AEVGYIARRGETKVGWNQVCSDFKHYC) are extracellular. The chain crosses the membrane as a helical span at residues 169 to 189 (FIYGFSLVNAFLATIAFLPVV). The Cytoplasmic portion of the chain corresponds to 190–208 (AVSAFHLFRMYGAQSAQSK).

This sequence belongs to the Casparian strip membrane proteins (CASP) family. As to quaternary structure, homodimer and heterodimers.

Its subcellular location is the cell membrane. The sequence is that of CASP-like protein 2U9 from Selaginella moellendorffii (Spikemoss).